The following is a 297-amino-acid chain: Virulence genes transcriptional activator (297 aa).

The region spanning 1–61 (MDFLINKKLK…IRKNGTLIPT (61 aa)) is the HTH lysR-type domain. Positions 21-40 (FSIATSVLYITRTPLSRVIS) form a DNA-binding region, H-T-H motif.

It belongs to the LysR transcriptional regulatory family.

Its subcellular location is the cytoplasm. Functionally, positive regulator for the plasmid-encoded virulence factors SpvA, SpvB, and SpvC. The sequence is that of Virulence genes transcriptional activator (mkaC) from Salmonella typhimurium (strain LT2 / SGSC1412 / ATCC 700720).